Consider the following 398-residue polypeptide: MLEPITSEHIVSENNSLTTQSVNAEQPAVAKINLLDLNRQQLREFFAKMGEKPFRADQVMKWMYHYCCDDFEQMTDINKVLRNKLQSVAEIRAPEVAEEQRSADGTIKWAIKVGDQQVETVYIPDGDRATLCVSSQVGCALECKFCSTAQQGFNRNLRVSEIIGQVWRAAKIIGALKVTGERPITNVVMMGMGEPLLNLNNVVPAMEIMLDDFGFGLSKRRVTLSTSGVVPALDKLGDMIDVALAISLHAPNDKIRDDIVPINRKYNIETFLAAVRRYLAKSNANQGRVTVEYVMLDHINDSTDDAHQLAEVLKDTPCKINLIPWNPFPGAPYGRSSNSRVDRFSKVLMEYGFTTIVRKTRGDDIDAACGQLAGEVIDRTKRTLKKKMAGEPISVRAV.

The active-site Proton acceptor is the E119. In terms of domain architecture, Radical SAM core spans 125 to 364 (DGDRATLCVS…TIVRKTRGDD (240 aa)). C132 and C369 are joined by a disulfide. Residues C139, C143, and C146 each coordinate [4Fe-4S] cluster. S-adenosyl-L-methionine-binding positions include 193–194 (GE), S225, 247–249 (SLH), and N326. C369 (S-methylcysteine intermediate) is an active-site residue.

Belongs to the radical SAM superfamily. RlmN family. [4Fe-4S] cluster is required as a cofactor.

Its subcellular location is the cytoplasm. The enzyme catalyses adenosine(2503) in 23S rRNA + 2 reduced [2Fe-2S]-[ferredoxin] + 2 S-adenosyl-L-methionine = 2-methyladenosine(2503) in 23S rRNA + 5'-deoxyadenosine + L-methionine + 2 oxidized [2Fe-2S]-[ferredoxin] + S-adenosyl-L-homocysteine. It carries out the reaction adenosine(37) in tRNA + 2 reduced [2Fe-2S]-[ferredoxin] + 2 S-adenosyl-L-methionine = 2-methyladenosine(37) in tRNA + 5'-deoxyadenosine + L-methionine + 2 oxidized [2Fe-2S]-[ferredoxin] + S-adenosyl-L-homocysteine. Its function is as follows. Specifically methylates position 2 of adenine 2503 in 23S rRNA and position 2 of adenine 37 in tRNAs. m2A2503 modification seems to play a crucial role in the proofreading step occurring at the peptidyl transferase center and thus would serve to optimize ribosomal fidelity. In Serratia proteamaculans (strain 568), this protein is Dual-specificity RNA methyltransferase RlmN.